Here is a 536-residue protein sequence, read N- to C-terminus: Cytochrome P450 monooxygenase fscF (536 aa).

Residues 9 to 29 traverse the membrane as a helical segment; it reads VSWLCALFTAIALYCIAVAFY. A heme-binding site is contributed by Cys-464.

Belongs to the cytochrome P450 family. Heme is required as a cofactor.

Its subcellular location is the membrane. Its pathway is secondary metabolite biosynthesis. Its function is as follows. Cytochrome P450 monooxygenase; part of the fragmented gene cluster that mediates the biosynthesis of fusarochromene, a tryptophan-derived metabolite closely related to a group of mycotoxins including fusarochromanone. Within the pathway, fscF catalyzes the epoxidation of desacetylfusarochromene which opens the way to the production of fusarochromanones. The first step of the pathway is the epimerization of L-tryptophan to D-tryptophan in the presence of the NRPS-like tryptophan epimerase fscC. D-tryptophan is subsequently hydroxylated by the tryptophan 6-hydroxylase fscE to yield 6-hydroxytryptophan. The pyrrole ring undergoes cleavaged by the tryptophan 2,3-dioxygenase fscD and is finally converted to 4-hydroxykyrunenine by the hydrolase fscH. The NRPS-like oxidoreductase fscA reduces the carboxyl group to primary alcohol and the DMATS-type prenyltransferase fscG performs prenylation, followed by the formation of a chromene ring catalyzed by the oxidoreductase fscI, which leads to desacetylfusarochromene. Epoxidation by fscF and rearrangement reactions of chromene double bonds convert compound desacetylfusarochromene to fusarochromanones. Although specific acetyltransferases were not found near the fsc gene cluster, several predicted enzymes containing the N-acetyltransferase superfamily domain are present in the genome of F.equiseti. These predicted enzymes may have the potential to convert desacetylfusarochromene to fusarochromene. The chain is Cytochrome P450 monooxygenase fscF from Fusarium equiseti (Fusarium scirpi).